A 659-amino-acid polypeptide reads, in one-letter code: MFS-type transporter phiD (659 aa).

Disordered regions lie at residues 1–42 (MGED…SWRV) and 76–127 (DLTV…IGKQ). The segment covering 93-109 (SIEKSKEDGDADDKRQS) has biased composition (basic and acidic residues). A helical transmembrane segment spans residues 144-164 (LIVLAASLAGFFSPLSASIYY). Asn182 is a glycosylation site (N-linked (GlcNAc...) asparagine). 5 helical membrane-spanning segments follow: residues 183-203 (LTVT…AGFS), 210-230 (PAYA…ALQN), 235-257 (LMVL…NGVV), 269-289 (FIAF…VIGG), and 299-319 (WIFW…FLFF). Asn338 is a glycosylation site (N-linked (GlcNAc...) asparagine). Transmembrane regions (helical) follow at residues 385–405 (AMIL…LTGA), 422–442 (LMYI…GKLV), 475–495 (LEVG…YGWI), 502–522 (VWGP…FFQV), 549–569 (LGAA…EGWA), and 572–592 (IVAM…VNGI). 2 stretches are compositionally biased toward basic and acidic residues: residues 605–634 (KKAG…QKAE) and 641–651 (DLEKQDRKDSQ). The segment at 605-659 (KKAGREAKIEAEKRAREEIETKKEAKQKAEEDVEIGDLEKQDRKDSQRPTSSKAT) is disordered.

It belongs to the major facilitator superfamily.

The protein resides in the membrane. MFS-type transporter; part of the gene cluster that mediates the biosynthesis of the antihypercholesterolemic agents phomoidrides which are dimeric anhydrides. This Fungal sp. (strain ATCC 74256) protein is MFS-type transporter phiD.